Here is a 484-residue protein sequence, read N- to C-terminus: Probable cytochrome P450 555A1 (484 aa).

Residues methionine 1–asparagine 21 form a helical membrane-spanning segment. A heme-binding site is contributed by cysteine 432.

Belongs to the cytochrome P450 family. Heme is required as a cofactor.

It is found in the membrane. This chain is Probable cytochrome P450 555A1 (cyp555A1), found in Dictyostelium discoideum (Social amoeba).